The sequence spans 144 residues: uncharacterized protein (144 aa).

Residues 1-58 (MDLASLNAFIAVAETGSFSEAGERLHLTQPAVSKRIAALEQQLQVRLFDRLGREVRLT) enclose the HTH lysR-type domain. The H-T-H motif DNA-binding region spans 18 to 38 (FSEAGERLHLTQPAVSKRIAA).

The protein belongs to the LysR transcriptional regulatory family.

This is an uncharacterized protein from Azotobacter vinelandii.